A 100-amino-acid polypeptide reads, in one-letter code: Putative pterin-4-alpha-carbinolamine dehydratase (100 aa).

The protein belongs to the pterin-4-alpha-carbinolamine dehydratase family.

It catalyses the reaction (4aS,6R)-4a-hydroxy-L-erythro-5,6,7,8-tetrahydrobiopterin = (6R)-L-erythro-6,7-dihydrobiopterin + H2O. This is Putative pterin-4-alpha-carbinolamine dehydratase from Bradyrhizobium diazoefficiens (strain JCM 10833 / BCRC 13528 / IAM 13628 / NBRC 14792 / USDA 110).